The following is a 490-amino-acid chain: Chromosomal replication initiator protein DnaA (490 aa).

The domain I, interacts with DnaA modulators stretch occupies residues 1–91; it reads MTMKGGVASQ…GELWAAHDAT (91 aa). The tract at residues 91-147 is domain II; it reads TGRRIDLKSRLEFEAAAGAYVEATPKAVAAEPIEIVLPVSTDAPTVVAPSAKSPRTQ. Residues 148–370 are domain III, AAA+ region; sequence GLQERFTFET…GALNTLSARA (223 aa). Glycine 192, glycine 194, lysine 195, and threonine 196 together coordinate ATP. The tract at residues 371–490 is domain IV, binds dsDNA; the sequence is GEGLSRMTLD…LETLTRKLRG (120 aa).

It belongs to the DnaA family. As to quaternary structure, oligomerizes as a right-handed, spiral filament on DNA at oriC.

The protein resides in the cytoplasm. Plays an essential role in the initiation and regulation of chromosomal replication. ATP-DnaA binds to the origin of replication (oriC) to initiate formation of the DNA replication initiation complex once per cell cycle. Binds the DnaA box (a 9 base pair repeat at the origin) and separates the double-stranded (ds)DNA. Forms a right-handed helical filament on oriC DNA; dsDNA binds to the exterior of the filament while single-stranded (ss)DNA is stabiized in the filament's interior. The ATP-DnaA-oriC complex binds and stabilizes one strand of the AT-rich DNA unwinding element (DUE), permitting loading of DNA polymerase. After initiation quickly degrades to an ADP-DnaA complex that is not apt for DNA replication. Binds acidic phospholipids. In Caulobacter vibrioides (strain ATCC 19089 / CIP 103742 / CB 15) (Caulobacter crescentus), this protein is Chromosomal replication initiator protein DnaA.